A 1369-amino-acid polypeptide reads, in one-letter code: Serine/threonine-protein kinase SIK3 (1369 aa).

Positions 26–55 (LLPPPAAGPPAAPAAVPPAAVPARPTAPAS) are disordered. The span at 27–45 (LPPPAAGPPAAPAAVPPAA) shows a compositional bias: pro residues. The segment covering 46–55 (VPARPTAPAS) has biased composition (low complexity). One can recognise a Protein kinase domain in the interval 66–317 (YEIDRTIGKG…MEQICRHKWM (252 aa)). Residue T71 is modified to Phosphothreonine. ATP contacts are provided by residues 72–80 (IGKGNFAVV) and K95. The active-site Proton acceptor is the D188. T221 is modified (phosphothreonine). One can recognise a UBA domain in the interval 344–384 (PLNDDVLLAMEDMGLDKERTLQSLRSDAYDHYSAIYSLLCD). T469 carries the phosphothreonine modification. Residues S551, S591, S592, S674, and S695 each carry the phosphoserine modification. The tract at residues 775 to 821 (IQPSSPPPNHPSNHLFRQPSNSPPPVSSAMITSHGATSPSQFQGLPS) is disordered. Over residues 803–818 (AMITSHGATSPSQFQG) the composition is skewed to polar residues. S914 is modified (phosphoserine). Positions 942–993 (LFSDQSRGSPSSYSPSTGVGFPPTQALKVPPLDQFPTFPPSAQQQPPHYTTS) are disordered. Residues 944–957 (SDQSRGSPSSYSPS) are compositionally biased toward low complexity. Polar residues predominate over residues 981–993 (PSAQQQPPHYTTS). S1026 carries the post-translational modification Phosphoserine. R1034 is subject to Omega-N-methylarginine. The tract at residues 1314–1338 (DEEDEECGVSLGHEHPGLGDGSQHL) is disordered.

The protein belongs to the protein kinase superfamily. CAMK Ser/Thr protein kinase family. SNF1 subfamily. Binds to and is activated by YWHAZ when phosphorylated on Thr-221. Interacts with 14-3-3 proteins. Interacts with HDAC4; this interaction leads to HDAC4 retention in the cytoplasm. Interacts with DEPTOR, MLST8/GbetaL, RICTOR and RPTOR. Mg(2+) is required as a cofactor. In terms of processing, phosphorylated at Thr-221 by STK11/LKB1 in complex with STE20-related adapter-alpha (STRADA) pseudo kinase and CAB39. In terms of tissue distribution, expressed in hypertrophic chondrocytes in the growth plate.

It localises to the cytoplasm. The catalysed reaction is L-seryl-[protein] + ATP = O-phospho-L-seryl-[protein] + ADP + H(+). It carries out the reaction L-threonyl-[protein] + ATP = O-phospho-L-threonyl-[protein] + ADP + H(+). With respect to regulation, activated by phosphorylation on Thr-221. Its function is as follows. Positive regulator of mTOR signaling that functions by triggering the degradation of DEPTOR, an mTOR inhibitor. Required for chondrocyte hypertrophy during skeletogenesis. Negatively regulates cAMP signaling pathway possibly by acting on CRTC2/TORC2 and CRTC3/TORC3. Prevents HDAC4 translocation to the nucleus. This chain is Serine/threonine-protein kinase SIK3 (Sik3), found in Mus musculus (Mouse).